Consider the following 143-residue polypeptide: UPF0299 membrane protein CGSHiEE_04225 (143 aa).

4 consecutive transmembrane segments (helical) span residues 1–21 (MIQKLFLLVRSLVILSIMLSL), 33–52 (VPGSIWGLLLLFLGLTTRVI), 60–80 (GASLLIRFMAVLFVPVSVGII), and 92–112 (ILLVPNIVSTCVTLLVIGFLG).

Belongs to the UPF0299 family.

Its subcellular location is the cell inner membrane. This Haemophilus influenzae (strain PittEE) protein is UPF0299 membrane protein CGSHiEE_04225.